The following is a 141-amino-acid chain: uncharacterized protein (141 aa).

2 consecutive transmembrane segments (helical) span residues 20-42 (FLVN…FCLA) and 52-74 (LHLC…IFTL).

Its subcellular location is the cell membrane. This is an uncharacterized protein from Archaeoglobus fulgidus (strain ATCC 49558 / DSM 4304 / JCM 9628 / NBRC 100126 / VC-16).